A 465-amino-acid chain; its full sequence is Ribulose bisphosphate carboxylase large chain (465 aa).

K4 carries the post-translational modification N6,N6,N6-trimethyllysine. Positions 113 and 163 each coordinate substrate. The active-site Proton acceptor is the K165. K167 contacts substrate. Residues K191, D193, and E194 each contribute to the Mg(2+) site. K191 is subject to N6-carboxylysine. The Proton acceptor role is filled by H284. Substrate is bound by residues R285, H317, and S369.

Belongs to the RuBisCO large chain family. Type I subfamily. As to quaternary structure, heterohexadecamer of 8 large chains and 8 small chains; disulfide-linked. The disulfide link is formed within the large subunit homodimers. Mg(2+) serves as cofactor. Post-translationally, the disulfide bond which can form in the large chain dimeric partners within the hexadecamer appears to be associated with oxidative stress and protein turnover.

It is found in the plastid. The protein resides in the chloroplast. It carries out the reaction 2 (2R)-3-phosphoglycerate + 2 H(+) = D-ribulose 1,5-bisphosphate + CO2 + H2O. It catalyses the reaction D-ribulose 1,5-bisphosphate + O2 = 2-phosphoglycolate + (2R)-3-phosphoglycerate + 2 H(+). Its function is as follows. RuBisCO catalyzes two reactions: the carboxylation of D-ribulose 1,5-bisphosphate, the primary event in carbon dioxide fixation, as well as the oxidative fragmentation of the pentose substrate in the photorespiration process. Both reactions occur simultaneously and in competition at the same active site. This chain is Ribulose bisphosphate carboxylase large chain, found in Morus rubra (Red mulberry).